The following is a 315-amino-acid chain: Methionyl-tRNA formyltransferase (315 aa).

113–116 (SLLP) lines the (6S)-5,6,7,8-tetrahydrofolate pocket.

It belongs to the Fmt family.

It catalyses the reaction L-methionyl-tRNA(fMet) + (6R)-10-formyltetrahydrofolate = N-formyl-L-methionyl-tRNA(fMet) + (6S)-5,6,7,8-tetrahydrofolate + H(+). In terms of biological role, attaches a formyl group to the free amino group of methionyl-tRNA(fMet). The formyl group appears to play a dual role in the initiator identity of N-formylmethionyl-tRNA by promoting its recognition by IF2 and preventing the misappropriation of this tRNA by the elongation apparatus. This is Methionyl-tRNA formyltransferase from Erwinia tasmaniensis (strain DSM 17950 / CFBP 7177 / CIP 109463 / NCPPB 4357 / Et1/99).